Here is a 428-residue protein sequence, read N- to C-terminus: D-amino acid dehydrogenase (428 aa).

FAD is bound at residue 3–17 (VVILGSGVVGVASAY).

The protein belongs to the DadA oxidoreductase family. The cofactor is FAD.

The enzyme catalyses a D-alpha-amino acid + A + H2O = a 2-oxocarboxylate + AH2 + NH4(+). It functions in the pathway amino-acid degradation; D-alanine degradation; NH(3) and pyruvate from D-alanine: step 1/1. Oxidative deamination of D-amino acids. The polypeptide is D-amino acid dehydrogenase (Burkholderia lata (strain ATCC 17760 / DSM 23089 / LMG 22485 / NCIMB 9086 / R18194 / 383)).